A 346-amino-acid polypeptide reads, in one-letter code: Probable alpha-1,2-galactosyltransferase gmh2 (346 aa).

Topologically, residues Met-1–Arg-11 are cytoplasmic. Residues Phe-12 to Tyr-32 traverse the membrane as a helical; Signal-anchor for type II membrane protein segment. Residues Phe-33–Asp-346 lie on the Lumenal side of the membrane. 3 N-linked (GlcNAc...) asparagine glycosylation sites follow: Asn-64, Asn-142, and Asn-224.

Belongs to the glycosyltransferase 34 family.

It is found in the golgi apparatus membrane. The protein is Probable alpha-1,2-galactosyltransferase gmh2 (gmh2) of Schizosaccharomyces pombe (strain 972 / ATCC 24843) (Fission yeast).